The primary structure comprises 137 residues: MLQPKRTKFRKQMTGHNRGLAQRGSKVSFGEFALKSVSRGRLTARQIEAARRALTRHVKRGGKIWIRVFPDKPVTKKPLEVRMGKGKGSVEYWVAQIQPGKVLYEIEGVSEELAREAFALAAAKLPLATSFVKRTVM.

Belongs to the universal ribosomal protein uL16 family. As to quaternary structure, part of the 50S ribosomal subunit.

Its function is as follows. Binds 23S rRNA and is also seen to make contacts with the A and possibly P site tRNAs. In Stutzerimonas stutzeri (strain A1501) (Pseudomonas stutzeri), this protein is Large ribosomal subunit protein uL16.